A 325-amino-acid chain; its full sequence is Tetraacyldisaccharide 4'-kinase (325 aa).

An ATP-binding site is contributed by Thr-55–Thr-62.

The protein belongs to the LpxK family.

It catalyses the reaction a lipid A disaccharide + ATP = a lipid IVA + ADP + H(+). It functions in the pathway glycolipid biosynthesis; lipid IV(A) biosynthesis; lipid IV(A) from (3R)-3-hydroxytetradecanoyl-[acyl-carrier-protein] and UDP-N-acetyl-alpha-D-glucosamine: step 6/6. Transfers the gamma-phosphate of ATP to the 4'-position of a tetraacyldisaccharide 1-phosphate intermediate (termed DS-1-P) to form tetraacyldisaccharide 1,4'-bis-phosphate (lipid IVA). The chain is Tetraacyldisaccharide 4'-kinase from Enterobacter sp. (strain 638).